The primary structure comprises 129 residues: Large ribosomal subunit protein uL22 (129 aa).

The protein belongs to the universal ribosomal protein uL22 family. Part of the 50S ribosomal subunit.

This protein binds specifically to 23S rRNA; its binding is stimulated by other ribosomal proteins, e.g. L4, L17, and L20. It is important during the early stages of 50S assembly. It makes multiple contacts with different domains of the 23S rRNA in the assembled 50S subunit and ribosome. Its function is as follows. The globular domain of the protein is located near the polypeptide exit tunnel on the outside of the subunit, while an extended beta-hairpin is found that lines the wall of the exit tunnel in the center of the 70S ribosome. The protein is Large ribosomal subunit protein uL22 of Sinorhizobium medicae (strain WSM419) (Ensifer medicae).